The sequence spans 593 residues: Melanopsin-A (593 aa).

Over 1-77 (MMSGAAHSVR…VDVPDHAHYT (77 aa)) the chain is Extracellular. The chain crosses the membrane as a helical span at residues 78–98 (IGAVILTVGITGMLGNFLVIY). Residues 99–112 (AFSRSRTLRTPANL) are Cytoplasmic-facing. Residues 113–133 (FIINLAITDFLMCATQAPIFF) traverse the membrane as a helical segment. The Extracellular portion of the chain corresponds to 134-150 (TTSMHKRWIFGEKGCEL). Cysteines 148 and 226 form a disulfide. The helical transmembrane segment at 151–171 (YAFCGALFGICSMITLMVIAV) threads the bilayer. The Cytoplasmic segment spans residues 172–191 (DRYFVITRPLASIGVLSQKR). Residues 192–212 (ALLILLVAWVYSLGWSLPPFF) traverse the membrane as a helical segment. Residues 213-243 (GWSAYVPEGLLTSCTWDYMTFTPSVRAYTML) lie on the Extracellular side of the membrane. The chain crosses the membrane as a helical span at residues 244–264 (LFIFVFFIPLIVIIYCYFFIF). At 265–300 (RSIRTTNEAVGKINGDNKRDSMKRFQRLKNEWKMAK) the chain is on the cytoplasmic side. The helical transmembrane segment at 301–321 (IALIVILMYVISWSPYSTVAL) threads the bilayer. At 322-336 (TAFAGYSDFLTPYMN) the chain is on the extracellular side. The chain crosses the membrane as a helical span at residues 337-357 (SVPAVIAKASAIHNPIIYAIT). An N6-(retinylidene)lysine modification is found at Lys-344. Over 358-593 (HPKYRLAIAK…HIDNHRPQYL (236 aa)) the chain is Cytoplasmic. Disordered regions lie at residues 397-449 (TVTS…RQVS) and 547-593 (RSNV…PQYL). The span at 414 to 449 (TGKSRLSSASDSESGWTDTEADLSSMSSRPASRQVS) shows a compositional bias: polar residues. Residues 581-593 (ESGHIDNHRPQYL) are compositionally biased toward basic and acidic residues.

Belongs to the G-protein coupled receptor 1 family. Opsin subfamily.

The protein localises to the cell membrane. Its function is as follows. Photoreceptor implicated in non-image-forming responses to light. May be able to isomerize covalently bound all-trans retinal back to 11-cis retinal. The polypeptide is Melanopsin-A (opn4a) (Danio rerio (Zebrafish)).